We begin with the raw amino-acid sequence, 630 residues long: Probable potassium transport system protein Kup 2 (630 aa).

Transmembrane regions (helical) follow at residues 14–34 (ATGF…DIGT), 56–76 (VIVL…VTAK), 108–128 (VPLL…SMIT), 145–165 (PALQ…LFAF), 176–196 (AFGP…LLHI), 214–234 (FMLS…LAVT), 255–275 (WLFF…AMVL), 293–313 (LLVP…QAVI), 352–372 (MLLL…SALA), 375–395 (YGIA…VVVW), 402–422 (PAAA…FFSA), and 427–447 (LMEG…LVWT).

It belongs to the HAK/KUP transporter (TC 2.A.72) family.

It is found in the cell inner membrane. It catalyses the reaction K(+)(in) + H(+)(in) = K(+)(out) + H(+)(out). Functionally, transport of potassium into the cell. Likely operates as a K(+):H(+) symporter. The chain is Probable potassium transport system protein Kup 2 from Rhodopseudomonas palustris (strain BisA53).